Consider the following 184-residue polypeptide: MADDSKSSNVGSRYAQALFDLASEQKEVPAVEADLKSLKAAIADSRDLRVLLASPAFGADDKRKGLSAIADKAKFKPTTKKFLGLLAANGRAAALPEVISAFERLAAEARGAVSAEVTTALPLSSAQAKGLAQALRQALGKDPEITTRVDPALLGGIKVKVGSRLFDASLRSKLDSLKFALKRA.

It belongs to the ATPase delta chain family. In terms of assembly, F-type ATPases have 2 components, F(1) - the catalytic core - and F(0) - the membrane proton channel. F(1) has five subunits: alpha(3), beta(3), gamma(1), delta(1), epsilon(1). F(0) has three main subunits: a(1), b(2) and c(10-14). The alpha and beta chains form an alternating ring which encloses part of the gamma chain. F(1) is attached to F(0) by a central stalk formed by the gamma and epsilon chains, while a peripheral stalk is formed by the delta and b chains.

Its subcellular location is the cell inner membrane. In terms of biological role, f(1)F(0) ATP synthase produces ATP from ADP in the presence of a proton or sodium gradient. F-type ATPases consist of two structural domains, F(1) containing the extramembraneous catalytic core and F(0) containing the membrane proton channel, linked together by a central stalk and a peripheral stalk. During catalysis, ATP synthesis in the catalytic domain of F(1) is coupled via a rotary mechanism of the central stalk subunits to proton translocation. This protein is part of the stalk that links CF(0) to CF(1). It either transmits conformational changes from CF(0) to CF(1) or is implicated in proton conduction. This is ATP synthase subunit delta from Phenylobacterium zucineum (strain HLK1).